We begin with the raw amino-acid sequence, 250 residues long: Isoprenyl transferase (250 aa).

Asp-27 is a catalytic residue. Asp-27 serves as a coordination point for Mg(2+). Residues 28 to 31 (GNRR), Trp-32, His-48, and 76 to 78 (STE) each bind substrate. Asn-79 functions as the Proton acceptor in the catalytic mechanism. Substrate contacts are provided by residues Phe-80, Arg-82, Arg-199, and 205-207 (RVS). Position 218 (Glu-218) interacts with Mg(2+).

Belongs to the UPP synthase family. In terms of assembly, homodimer. Mg(2+) is required as a cofactor.

In terms of biological role, catalyzes the condensation of isopentenyl diphosphate (IPP) with allylic pyrophosphates generating different type of terpenoids. The protein is Isoprenyl transferase of Chlamydia abortus (strain DSM 27085 / S26/3) (Chlamydophila abortus).